The sequence spans 352 residues: Heat-inducible transcription repressor HrcA (352 aa).

It belongs to the HrcA family.

In terms of biological role, negative regulator of class I heat shock genes (grpE-dnaK-dnaJ and groELS operons). Prevents heat-shock induction of these operons. This Thermosynechococcus vestitus (strain NIES-2133 / IAM M-273 / BP-1) protein is Heat-inducible transcription repressor HrcA.